We begin with the raw amino-acid sequence, 328 residues long: Malate dehydrogenase (328 aa).

An NAD(+)-binding site is contributed by 12–18; the sequence is GAAGQIA. Substrate-binding residues include Arg-93 and Arg-99. NAD(+) is bound by residues Asn-106, Gln-113, and 130–132; that span reads VGN. 2 residues coordinate substrate: Asn-132 and Arg-163. The Proton acceptor role is filled by His-188.

The protein belongs to the LDH/MDH superfamily. MDH type 2 family.

The catalysed reaction is (S)-malate + NAD(+) = oxaloacetate + NADH + H(+). Catalyzes the reversible oxidation of malate to oxaloacetate. The chain is Malate dehydrogenase from Burkholderia cenocepacia (strain ATCC BAA-245 / DSM 16553 / LMG 16656 / NCTC 13227 / J2315 / CF5610) (Burkholderia cepacia (strain J2315)).